The primary structure comprises 235 residues: Acyl-protein thioesterase 1 (235 aa).

Residues serine 125, aspartate 181, and histidine 213 each act as charge relay system in the active site.

The protein belongs to the AB hydrolase superfamily. AB hydrolase 2 family.

The protein resides in the cytoplasm. Its subcellular location is the nucleus. It carries out the reaction S-hexadecanoyl-L-cysteinyl-[protein] + H2O = L-cysteinyl-[protein] + hexadecanoate + H(+). In terms of biological role, hydrolyzes fatty acids from S-acylated cysteine residues in proteins with a strong preference for palmitoylated G-alpha proteins over other acyl substrates. Mediates the deacylation of G-alpha proteins such as GPA1 in vivo, but has weak or no activity toward palmitoylated Ras proteins. Has weak lysophospholipase activity in vitro; however such activity may not exist in vivo. This Gibberella zeae (strain ATCC MYA-4620 / CBS 123657 / FGSC 9075 / NRRL 31084 / PH-1) (Wheat head blight fungus) protein is Acyl-protein thioesterase 1.